The sequence spans 291 residues: MTTLAIDIGGTKLAAALIGADGQIRDRRELPTPASQTPEALRDALSALVSPLQAHAQRVAIASTGIIRDGSLLALNPHNLGGLLHFPLVKTLEQLTNLPTIAINDAQAAAWAEYQALEGDVTEMVFITVSTGVGGGVVSGGKLLTGPGGLAGHIGHTLADPHGPVCGCGRTGCVEAIASGRGIAAAAQGELAGADARTIFTRAGQGDEQAQWLIHRSARTLARLIADIKATTDCQCVVVGGSVGLAEGYLALVETYLAQEPAAFHVDLLAAHYRHDAGLLGAALLAQGEKL.

Residues 5-12 (AIDIGGTK) and 132-139 (GVGGGVVS) contribute to the ATP site. Residues His-156, Cys-166, Cys-168, and Cys-173 each coordinate Zn(2+).

The protein belongs to the ROK (NagC/XylR) family. NanK subfamily. In terms of assembly, homodimer.

It catalyses the reaction an N-acyl-D-mannosamine + ATP = an N-acyl-D-mannosamine 6-phosphate + ADP + H(+). It participates in amino-sugar metabolism; N-acetylneuraminate degradation; D-fructose 6-phosphate from N-acetylneuraminate: step 2/5. Functionally, catalyzes the phosphorylation of N-acetylmannosamine (ManNAc) to ManNAc-6-P. The polypeptide is N-acetylmannosamine kinase (Escherichia coli (strain SE11)).